The sequence spans 1546 residues: Mediator of RNA polymerase II transcription subunit 14 (1546 aa).

2 short sequence motifs (LXXLL motif) span residues 51 to 55 (LAELL) and 468 to 472 (LPSLL). Disordered regions lie at residues 692 to 717 (KSAT…PSGS), 1000 to 1193 (GRAP…NRPW), and 1512 to 1546 (NPMM…GGPQ). Composition is skewed to low complexity over residues 693 to 717 (SATA…PSGS), 1020 to 1035 (GGPS…GSSP), and 1061 to 1075 (PSSS…PHPS). The segment covering 1093–1102 (PPAPHMPHPS) has biased composition (pro residues). Over residues 1125–1149 (GPNTLYMQSHQDSPFTAMSPANNQW) the composition is skewed to polar residues. Residues 1153–1163 (PSMPRPSPRPG) show a composition bias toward pro residues. Positions 1515-1527 (MPMQQLQPQVGPQ) are enriched in low complexity.

The protein belongs to the Mediator complex subunit 14 family. Component of the Mediator complex.

It localises to the nucleus. Functionally, component of the Mediator complex, a coactivator involved in the regulated transcription of nearly all RNA polymerase II-dependent genes. Mediator functions as a bridge to convey information from gene-specific regulatory proteins to the basal RNA polymerase II transcription machinery. Mediator is recruited to promoters by direct interactions with regulatory proteins and serves as a scaffold for the assembly of a functional preinitiation complex with RNA polymerase II and the general transcription factors. This is Mediator of RNA polymerase II transcription subunit 14 (MED14) from Drosophila pseudoobscura pseudoobscura (Fruit fly).